The sequence spans 436 residues: NAD(P)-dependent benzaldehyde dehydrogenase (436 aa).

NADP(+) contacts are provided by residues 117–119, 143–147, 175–178, 193–194, 215–216, cysteine 249, and 337–339; these read GPF, KPSET, RDEN, GS, EL, and ELF. Catalysis depends on residues glutamate 215 and cysteine 249.

This sequence belongs to the aldehyde dehydrogenase family.

It carries out the reaction benzaldehyde + NAD(+) + H2O = benzoate + NADH + 2 H(+). The enzyme catalyses benzaldehyde + NADP(+) + H2O = benzoate + NADPH + 2 H(+). The protein operates within aromatic compound metabolism; (R)-mandelate degradation; benzoate from (R)-mandelate: step 4/4. Its function is as follows. NAD or NADP-dependent benzaldehyde dehydrogenase that catalyzes the conversion of benzaldehyde into benzoate in the (R)-mandelate degradation pathway. The sequence is that of NAD(P)-dependent benzaldehyde dehydrogenase (mdlD) from Pseudomonas putida (Arthrobacter siderocapsulatus).